A 194-amino-acid chain; its full sequence is Imidazoleglycerol-phosphate dehydratase (194 aa).

Belongs to the imidazoleglycerol-phosphate dehydratase family.

The protein localises to the cytoplasm. The catalysed reaction is D-erythro-1-(imidazol-4-yl)glycerol 3-phosphate = 3-(imidazol-4-yl)-2-oxopropyl phosphate + H2O. Its pathway is amino-acid biosynthesis; L-histidine biosynthesis; L-histidine from 5-phospho-alpha-D-ribose 1-diphosphate: step 6/9. This Bacillus cereus (strain ATCC 14579 / DSM 31 / CCUG 7414 / JCM 2152 / NBRC 15305 / NCIMB 9373 / NCTC 2599 / NRRL B-3711) protein is Imidazoleglycerol-phosphate dehydratase.